The sequence spans 614 residues: Fimbrin (614 aa).

EF-hand domains are found at residues 16 to 50 (EEIL…DSKK) and 51 to 86 (GSYD…LKKG). Positions 29, 31, 35, 40, 66, 68, 70, and 75 each coordinate Ca(2+). Actin-binding regions lie at residues 98 to 368 (TIKG…GLEP) and 369 to 614 (LNEE…LMAV). 4 Calponin-homology (CH) domains span residues 112–233 (EEER…RRGL), 261–364 (LPPE…NTHP), 385–495 (EREA…RMNI), and 508–614 (TLSD…LMAV).

It is found in the cytoplasm. It localises to the cytoskeleton. Its subcellular location is the actin patch. Its function is as follows. Binds to actin, and functionally associates with actin structures involved in the development and maintenance of cell polarity. Plays a role in cytokinesis. Plays important roles in mating and in spore formation. The chain is Fimbrin (fim1) from Schizosaccharomyces pombe (strain 972 / ATCC 24843) (Fission yeast).